We begin with the raw amino-acid sequence, 302 residues long: tRNA demethylase abh1 (302 aa).

Substrate contacts are provided by residues Trp142 and 149–151 (YDW). Positions 187–299 (KAEAAIVNFY…RVNFNVRQVR (113 aa)) constitute a Fe2OG dioxygenase domain. 194 to 196 (NFY) lines the 2-oxoglutarate pocket. 2 residues coordinate Fe cation: His205 and Asp207. Arg235 lines the substrate pocket. His261 is a binding site for Fe cation. Residue 290-296 (RVNFNVR) coordinates 2-oxoglutarate.

The protein belongs to the alkB family. Requires Fe(2+) as cofactor.

The protein resides in the cytoplasm. It localises to the nucleus. It catalyses the reaction an N(1)-methyladenosine in tRNA + 2-oxoglutarate + O2 = an adenosine in tRNA + formaldehyde + succinate + CO2. The enzyme catalyses N(1)-methyladenosine(58) in tRNA + 2-oxoglutarate + O2 = adenosine(58) in tRNA + formaldehyde + succinate + CO2. Functionally, dioxygenase that acts as on nucleic acids, such as DNA and tRNA. Requires molecular oxygen, alpha-ketoglutarate and iron. Mainly acts as a tRNA demethylase by removing N(1)-methyladenine from various tRNAs, with a preference for N(1)-methyladenine at position 58 (m1A58) present on a stem loop structure of tRNAs. Acts as a regulator of translation initiation and elongation. Does not appear to possess DNA repair activity; no activity towards methylated DNA or etheno adducts. Exhibits a weak and unstable DNA lyase activity; this activity is probably not biologically significant and proceeds by a mechanism different from the classical dioxygenase reaction as it does not require 2-oxoglutarate or iron. This chain is tRNA demethylase abh1 (abh1), found in Schizosaccharomyces pombe (strain 972 / ATCC 24843) (Fission yeast).